Consider the following 326-residue polypeptide: Protein spaetzle (326 aa).

The signal sequence occupies residues 1-25 (MMTPMWISLFKVLLLLFAFFATYEA). An N-linked (GlcNAc...) asparagine glycan is attached at N48. The disordered stretch occupies residues 56-82 (FMPIPTQHDDPTQKQKQNQNQSPIPET). Residues 69–80 (KQKQNQNQSPIP) show a composition bias toward polar residues. 2 N-linked (GlcNAc...) asparagine glycosylation sites follow: N114 and N164. The segment at 152–174 (YRPPQSPARPLRNDTKEHNPCAK) is disordered. Residues 162 to 174 (LRNDTKEHNPCAK) are compositionally biased toward basic and acidic residues. The region spanning 228-322 (FLCRSIRKLV…FKIPSCCKCA (95 aa)) is the Spaetzle domain. Cystine bridges form between C230–C288, C267–C319, and C274–C321.

Homodimer; disulfide-linked. In the presence of Tl, crystal structures show one Tl molecule bound to a spaetzle C-106 homodimer. However, the active complex probably consists of two Tl molecules bound to a spaetzle C-106 homodimer. This is supported by in vitro experiments which also show binding of the spaetzle C-106 dimer to 2 Tl receptors. Ligand binding induces conformational changes in the extracellular domain of Tl. This may enable a secondary homodimerization interface at the C-terminus of the Tl extracellular domain. In terms of processing, during embryonic development proteolytically processed by activated ea/easter; ea cleaves the signal peptide and also generates the C-terminal 12 kDa active ligand for the Toll receptor, C-106 (except for isoform 8.24 and isoform 11.27 as they do not contain the cleavage site). During the immune response, cleaved in the same manner by SPE. Post-translationally, extracellular forms of isoform 8.19 and isoform 11.7 are glycosylated.

The protein localises to the secreted. Functionally, the activated form, spaetzle C-106, acts as a ligand for the Toll receptor. Binding to Toll activates the Toll signaling pathway and induces expression of the antifungal peptide drosomycin. Component of the extracellular signaling pathway that establishes dorsal-ventral polarity in the embryo. This chain is Protein spaetzle, found in Drosophila melanogaster (Fruit fly).